The primary structure comprises 261 residues: Thioredoxin-like protein HCF164, chloroplastic (261 aa).

Residues 1-40 (MARLVFSLNLPSSHGFNLSPRNLQSFFVTQTGAPRFRAVR) constitute a chloroplast transit peptide. Residues 39–91 (VRCKPNPESSETKQEKLVIDNGETSSASKEVESSSSVADSSSSSSSGFPESPN) form a disordered region. Residues 63-84 (SSASKEVESSSSVADSSSSSSS) show a composition bias toward low complexity. One can recognise a Thioredoxin domain in the interval 101-229 (VTVIAALSLF…LVENVNALAA (129 aa)). Residues Cys150 and Cys153 each act as nucleophile in the active site. A disulfide bridge connects residues Cys150 and Cys153.

Belongs to the thioredoxin family. As to quaternary structure, interacts in vitro with LTO1.

It is found in the plastid. The protein resides in the chloroplast thylakoid membrane. Its function is as follows. Thiol-disulfide oxidoreductase that participates in various redox reactions in the chloroplast. Mediates the reduction of PSI-N in the thylakoid lumen. May interact and probably reduce other target proteins of the thylakoid membrane, such as FTSH2, FTSH8, LHCB5, atpA, atpB, atpE, petA and petC. Involved in the biogenesis of the plastid cytochrome b6f complex. Reducing equivalents are provided by stromal M-type thioredoxins and probably transduced through the thylakoid membrane by CCDA. Possesses low insulin disulfide bonds reducing activity. The sequence is that of Thioredoxin-like protein HCF164, chloroplastic from Arabidopsis thaliana (Mouse-ear cress).